The chain runs to 263 residues: Sepiapterin reductase (263 aa).

NADP(+)-binding positions include 18-24, 46-47, and 73-74; these read GASRGFG, RT, and DL. Residues 160–161 and Tyr173 contribute to the substrate site; that span reads SL. Position 177 (Lys177) interacts with NADP(+). Gly202 is a binding site for substrate. 204–209 provides a ligand contact to NADP(+); that stretch reads LDTDMH. A substrate-binding site is contributed by Asp260.

The protein belongs to the sepiapterin reductase family. In terms of assembly, homodimer.

It is found in the cytoplasm. The enzyme catalyses L-erythro-7,8-dihydrobiopterin + NADP(+) = L-sepiapterin + NADPH + H(+). It carries out the reaction (6R)-L-erythro-5,6,7,8-tetrahydrobiopterin + 2 NADP(+) = 6-pyruvoyl-5,6,7,8-tetrahydropterin + 2 NADPH + 2 H(+). Catalyzes the final one or two reductions in tetra-hydrobiopterin biosynthesis to form 5,6,7,8-tetrahydrobiopterin. In Xenopus laevis (African clawed frog), this protein is Sepiapterin reductase (spr).